The following is a 624-amino-acid chain: DNA mismatch repair protein MutL (624 aa).

The tract at residues 336–357 (GEGFHETSDSFSSRSSQHSDAR) is disordered. Positions 344–353 (DSFSSRSSQH) are enriched in low complexity.

This sequence belongs to the DNA mismatch repair MutL/HexB family.

Its function is as follows. This protein is involved in the repair of mismatches in DNA. It is required for dam-dependent methyl-directed DNA mismatch repair. May act as a 'molecular matchmaker', a protein that promotes the formation of a stable complex between two or more DNA-binding proteins in an ATP-dependent manner without itself being part of a final effector complex. The chain is DNA mismatch repair protein MutL from Chlorobium phaeobacteroides (strain BS1).